A 254-amino-acid polypeptide reads, in one-letter code: UPF0246 protein Fphi_1075 (254 aa).

The protein belongs to the UPF0246 family.

In Francisella philomiragia subsp. philomiragia (strain ATCC 25017 / CCUG 19701 / FSC 153 / O#319-036), this protein is UPF0246 protein Fphi_1075.